The primary structure comprises 144 residues: DNA polymerase III subunit chi (144 aa).

It belongs to the DNA polymerase III chi/HolC chain family. In terms of assembly, DNA polymerase III contains a core (composed of alpha, epsilon and theta chains) that associates with a tau subunit. This core dimerizes to form the POLIII' complex. PolIII' associates with the gamma complex (composed of gamma, delta, delta', psi and chi chains) and with the beta chain to form the complete DNA polymerase III complex. Interacts directly with the psi subunit (holD). The only subunit of the DNA polymerase III holoenzyme known to interact with single-stranded DNA binding protein (SSB), interacts directly with DNA helicase YoaA.

It catalyses the reaction DNA(n) + a 2'-deoxyribonucleoside 5'-triphosphate = DNA(n+1) + diphosphate. Its function is as follows. Part of the beta sliding clamp loading complex, which hydrolyzes ATP to load the beta clamp onto primed DNA to form the DNA replication pre-initiation complex. DNA polymerase III is a complex, multichain enzyme responsible for most of the replicative synthesis in bacteria. This DNA polymerase also exhibits 3' to 5' exonuclease activity. This subunit may stabilize YoaA and/or stimulate the helicase activity of YoaA. This chain is DNA polymerase III subunit chi (holC), found in Haemophilus influenzae (strain ATCC 51907 / DSM 11121 / KW20 / Rd).